The chain runs to 233 residues: Orotidine 5'-phosphate decarboxylase (233 aa).

Substrate is bound by residues aspartate 11, lysine 33, 60–69 (DLKFHDIPNT), threonine 120, arginine 181, glutamine 190, glycine 210, and arginine 211. Lysine 62 serves as the catalytic Proton donor.

Belongs to the OMP decarboxylase family. Type 1 subfamily. As to quaternary structure, homodimer.

It catalyses the reaction orotidine 5'-phosphate + H(+) = UMP + CO2. It participates in pyrimidine metabolism; UMP biosynthesis via de novo pathway; UMP from orotate: step 2/2. Its function is as follows. Catalyzes the decarboxylation of orotidine 5'-monophosphate (OMP) to uridine 5'-monophosphate (UMP). The chain is Orotidine 5'-phosphate decarboxylase from Vibrio parahaemolyticus serotype O3:K6 (strain RIMD 2210633).